The primary structure comprises 328 residues: Ketol-acid reductoisomerase (NADP(+)) (328 aa).

The 180-residue stretch at 2–181 folds into the KARI N-terminal Rossmann domain; the sequence is AKIYRETDAD…GFTRVGVIET (180 aa). Residues 25–28, R48, S52, and 82–85 contribute to the NADP(+) site; these read YGIQ and DMVQ. The active site involves H107. Position 133 (G133) interacts with NADP(+). The region spanning 182–327 is the KARI C-terminal knotted domain; it reads TFAEETETDL…EDLRRLMRSG (146 aa). Mg(2+) is bound by residues D190, E194, E226, and E230. S251 provides a ligand contact to substrate.

It belongs to the ketol-acid reductoisomerase family. Mg(2+) is required as a cofactor.

The catalysed reaction is (2R)-2,3-dihydroxy-3-methylbutanoate + NADP(+) = (2S)-2-acetolactate + NADPH + H(+). It catalyses the reaction (2R,3R)-2,3-dihydroxy-3-methylpentanoate + NADP(+) = (S)-2-ethyl-2-hydroxy-3-oxobutanoate + NADPH + H(+). The protein operates within amino-acid biosynthesis; L-isoleucine biosynthesis; L-isoleucine from 2-oxobutanoate: step 2/4. It participates in amino-acid biosynthesis; L-valine biosynthesis; L-valine from pyruvate: step 2/4. Functionally, involved in the biosynthesis of branched-chain amino acids (BCAA). Catalyzes an alkyl-migration followed by a ketol-acid reduction of (S)-2-acetolactate (S2AL) to yield (R)-2,3-dihydroxy-isovalerate. In the isomerase reaction, S2AL is rearranged via a Mg-dependent methyl migration to produce 3-hydroxy-3-methyl-2-ketobutyrate (HMKB). In the reductase reaction, this 2-ketoacid undergoes a metal-dependent reduction by NADPH to yield (R)-2,3-dihydroxy-isovalerate. This Caldivirga maquilingensis (strain ATCC 700844 / DSM 13496 / JCM 10307 / IC-167) protein is Ketol-acid reductoisomerase (NADP(+)).